The chain runs to 119 residues: Hemerythrin subunit B (119 aa).

Fe cation-binding residues include H26, H55, E59, H74, H78, H107, and D112.

This sequence belongs to the hemerythrin family.

Its function is as follows. Hemerythrin is a respiratory protein in blood cells of certain marine worms. The oxygen-binding site in each chain contains two iron atoms. The polypeptide is Hemerythrin subunit B (Sipunculus nudus (Sipunculan worm)).